The following is a 115-amino-acid chain: Fluoride-specific ion channel FluC 4 (115 aa).

Transmembrane regions (helical) follow at residues 19-39 and 42-62; these read WGTF…AGLG and LGGI…LLGG. G61 and T64 together coordinate Na(+). A helical membrane pass occupies residues 89–109; it reads IVASALLCVLAVAAGYGGIMW.

Belongs to the fluoride channel Fluc/FEX (TC 1.A.43) family.

It localises to the cell inner membrane. It catalyses the reaction fluoride(in) = fluoride(out). Na(+) is not transported, but it plays an essential structural role and its presence is essential for fluoride channel function. Functionally, fluoride-specific ion channel. Important for reducing fluoride concentration in the cell, thus reducing its toxicity. This is Fluoride-specific ion channel FluC 4 from Brucella melitensis biotype 1 (strain ATCC 23456 / CCUG 17765 / NCTC 10094 / 16M).